The sequence spans 414 residues: 26S proteasome regulatory subunit 8 homolog (414 aa).

Residue 197 to 204 participates in ATP binding; sequence GPPGTGKT.

The protein belongs to the AAA ATPase family.

The protein localises to the cytoplasm. It localises to the nucleus. In terms of biological role, the 26S proteasome is involved in the ATP-dependent degradation of ubiquitinated proteins. The regulatory (or ATPase) complex confers ATP dependency and substrate specificity to the 26S complex. The sequence is that of 26S proteasome regulatory subunit 8 homolog from Naegleria fowleri (Brain eating amoeba).